Consider the following 558-residue polypeptide: Glucose-6-phosphate isomerase (558 aa).

Alanine 2 bears the N-acetylalanine mark. Residue lysine 12 is modified to N6-acetyllysine. The residue at position 34 (lysine 34) is an N6-(2-hydroxyisobutyryl)lysine. Phosphoserine is present on serine 107. Threonine 109 carries the post-translational modification Phosphothreonine. Lysine 142 carries the N6-acetyllysine modification. 159 to 160 (GS) lines the D-glucose 6-phosphate pocket. Phosphoserine; by CK2 is present on serine 185. D-glucose 6-phosphate is bound at residue 210 to 215 (SKTFTT). Threonine 250 bears the Phosphothreonine mark. Positions 354, 358, and 389 each coordinate D-glucose 6-phosphate. Glutamate 358 serves as the catalytic Proton donor. The active site involves histidine 389. An N6-acetyllysine; alternate modification is found at lysine 454. N6-malonyllysine; alternate is present on lysine 454. Lysine 454 carries the N6-succinyllysine; alternate modification. Serine 455 bears the Phosphoserine mark. A D-glucose 6-phosphate-binding site is contributed by lysine 519. Lysine 519 is an active-site residue.

This sequence belongs to the GPI family. As to quaternary structure, homodimer in the catalytically active form, monomer in the secreted form. Phosphorylation at Ser-185 by CK2 has been shown to decrease enzymatic activity and may contribute to secretion by a non-classical secretory pathway. Post-translationally, ISGylated.

The protein localises to the cytoplasm. It is found in the secreted. The enzyme catalyses alpha-D-glucose 6-phosphate = beta-D-fructose 6-phosphate. It participates in carbohydrate degradation; glycolysis; D-glyceraldehyde 3-phosphate and glycerone phosphate from D-glucose: step 2/4. Its function is as follows. In the cytoplasm, catalyzes the conversion of glucose-6-phosphate to fructose-6-phosphate, the second step in glycolysis, and the reverse reaction during gluconeogenesis. Besides it's role as a glycolytic enzyme, also acts as a secreted cytokine: acts as an angiogenic factor (AMF) that stimulates endothelial cell motility. Acts as a neurotrophic factor, neuroleukin, for spinal and sensory neurons. It is secreted by lectin-stimulated T-cells and induces immunoglobulin secretion. The sequence is that of Glucose-6-phosphate isomerase from Sus scrofa (Pig).